Here is a 148-residue protein sequence, read N- to C-terminus: MDRLDDTDERILAELAEHARATFAEIGHKVSLSAPAVKRRVDRMLESGVIKGFTTVVDRNALGWNTEAYVQIFCHGRIAPDQLRAAWVNIPEVVSAATVTGTSDAILHVLAHDMRHLEAALERIRSSADVERSESTVVLSNLIDRMPP.

Residues 4–65 (LDDTDERILA…VVDRNALGWN (62 aa)) enclose the HTH asnC-type domain. A DNA-binding region (H-T-H motif) is located at residues 23-42 (FAEIGHKVSLSAPAVKRRVD).

Homodimer. Forms oligomers.

The DNA-binding activity of Rv2324 is modulated by interaction of Rv2324 with amino acids. Aspartate is the only effector amino acid that completely abolishes DNA binding. The majority of amino acids induce a dimer-tetramer or dimer-hexamer oligomeric transition. In response to amino-acid binding, adopts an open quaternary association, which is a part of the functional requirement to bind to non-symmetrically distributed target DNA binding sites. Its function is as follows. Transcriptional regulator involved in growth, DNA replication and damage control. Plays a crucial role in regulating survival and growth of M.tuberculosis. Could function as a global regulator in both the latent/persistent and active phases of growth. Binds to its own promoter region and to promoters of multiple metabolic genes, such as serB2, lat, ald and roc operon. In vitro, interacts with intrinsically curved and non-curved DNA molecules, and with both supercoiled and linear DNA, with higher affinity for supercoiled DNA. Binds to DNA recombination, replication and repair intermediates. The protein is HTH-type transcriptional regulator Rv2324 of Mycobacterium tuberculosis (strain ATCC 25618 / H37Rv).